A 135-amino-acid chain; its full sequence is MQYGAAAAEQAWYMPAAAMVVAAAAETAAERVERLASESAVVVFSVSSCCMCHAVKRLFCGMGVHPAVHELDLDPRGRDLERALARLVGAGGAAAAAVPVVFIGGKLVGAMDRVMAAHINGSLVPLLKEAGALWL.

A Glutaredoxin domain is found at 29–134; that stretch reads AERVERLASE…PLLKEAGALW (106 aa). An intrachain disulfide couples cysteine 49 to cysteine 52. The Responsive for interaction with TGA factors signature appears at 132–135; that stretch reads ALWL.

This sequence belongs to the glutaredoxin family. CC-type subfamily.

The protein resides in the cytoplasm. It is found in the nucleus. Functionally, has a glutathione-disulfide oxidoreductase activity in the presence of NADPH and glutathione reductase. Reduces low molecular weight disulfides and proteins. The sequence is that of Glutaredoxin-C5 (GRXC5) from Oryza sativa subsp. japonica (Rice).